The following is a 288-amino-acid chain: Release factor glutamine methyltransferase (288 aa).

S-adenosyl-L-methionine-binding residues include aspartate 142 and asparagine 186. Position 186-189 (186-189) interacts with substrate; it reads NPPY.

This sequence belongs to the protein N5-glutamine methyltransferase family. PrmC subfamily.

It catalyses the reaction L-glutaminyl-[peptide chain release factor] + S-adenosyl-L-methionine = N(5)-methyl-L-glutaminyl-[peptide chain release factor] + S-adenosyl-L-homocysteine + H(+). In terms of biological role, methylates the class 1 translation termination release factors RF1/PrfA and RF2/PrfB on the glutamine residue of the universally conserved GGQ motif. This is Release factor glutamine methyltransferase from Mycobacterium leprae (strain TN).